An 873-amino-acid polypeptide reads, in one-letter code: DNA mismatch repair protein MutS (873 aa).

Residue 625 to 632 (GPNMGGKS) participates in ATP binding.

The protein belongs to the DNA mismatch repair MutS family.

Functionally, this protein is involved in the repair of mismatches in DNA. It is possible that it carries out the mismatch recognition step. This protein has a weak ATPase activity. The protein is DNA mismatch repair protein MutS of Xanthomonas campestris pv. campestris (strain 8004).